The sequence spans 202 residues: MRHPFKVVVVTGVPGVGKTTVIKELQGLAEKEGVKLHIVNFGSFMLDTAVKLGLVEDRDKIRTLPLRRQLELQREAAKRIVAEASKALGGDGVLIIDTHALVKTVAGYWPGLPKHVLDELKPDMIAVVEASPEEVAARQARDTTRYRVDIGGVEGVKRLMENARAASIASAIQYASTVAIVENREGEAAKAAEELLRLIKNL.

An ATP-binding site is contributed by 12–20 (GVPGVGKTT).

Belongs to the archaeal adenylate kinase family.

Its subcellular location is the cytoplasm. It catalyses the reaction AMP + ATP = 2 ADP. This is Adenylate kinase (adkA) from Aeropyrum pernix (strain ATCC 700893 / DSM 11879 / JCM 9820 / NBRC 100138 / K1).